The primary structure comprises 346 residues: Phosphoribosylformylglycinamidine cyclo-ligase (346 aa).

It belongs to the AIR synthase family.

It localises to the cytoplasm. The catalysed reaction is 2-formamido-N(1)-(5-O-phospho-beta-D-ribosyl)acetamidine + ATP = 5-amino-1-(5-phospho-beta-D-ribosyl)imidazole + ADP + phosphate + H(+). It participates in purine metabolism; IMP biosynthesis via de novo pathway; 5-amino-1-(5-phospho-D-ribosyl)imidazole from N(2)-formyl-N(1)-(5-phospho-D-ribosyl)glycinamide: step 2/2. This chain is Phosphoribosylformylglycinamidine cyclo-ligase, found in Bacillus cereus (strain AH187).